The sequence spans 353 residues: Quinolinate synthase (353 aa).

The iminosuccinate site is built by H47 and S68. Residue C113 participates in [4Fe-4S] cluster binding. Iminosuccinate is bound by residues 139-141 (YAN) and S156. C200 is a [4Fe-4S] cluster binding site. Iminosuccinate-binding positions include 226–228 (HPE) and T243. C297 is a binding site for [4Fe-4S] cluster.

The protein belongs to the quinolinate synthase family. Type 1 subfamily. [4Fe-4S] cluster is required as a cofactor.

The protein localises to the cytoplasm. The enzyme catalyses iminosuccinate + dihydroxyacetone phosphate = quinolinate + phosphate + 2 H2O + H(+). Its pathway is cofactor biosynthesis; NAD(+) biosynthesis; quinolinate from iminoaspartate: step 1/1. Functionally, catalyzes the condensation of iminoaspartate with dihydroxyacetone phosphate to form quinolinate. The sequence is that of Quinolinate synthase from Photobacterium profundum (strain SS9).